Here is a 101-residue protein sequence, read N- to C-terminus: uncharacterized protein (101 aa).

It is found in the mitochondrion. This is an uncharacterized protein from Arabidopsis thaliana (Mouse-ear cress).